The primary structure comprises 399 residues: Tyrosine--tRNA ligase 2 (399 aa).

The 'HIGH' region signature appears at 41 to 50 (PTAPDLHLGH). The 'KMSKS' region motif lies at 225 to 229 (KMSKS). Residue K228 coordinates ATP. In terms of domain architecture, S4 RNA-binding spans 336–398 (ILIANLLKEA…GKRKFANITV (63 aa)).

This sequence belongs to the class-I aminoacyl-tRNA synthetase family. TyrS type 2 subfamily. In terms of assembly, homodimer.

The protein resides in the cytoplasm. It carries out the reaction tRNA(Tyr) + L-tyrosine + ATP = L-tyrosyl-tRNA(Tyr) + AMP + diphosphate + H(+). Catalyzes the attachment of tyrosine to tRNA(Tyr) in a two-step reaction: tyrosine is first activated by ATP to form Tyr-AMP and then transferred to the acceptor end of tRNA(Tyr). This is Tyrosine--tRNA ligase 2 from Pseudoalteromonas translucida (strain TAC 125).